The following is a 191-amino-acid chain: Inosine triphosphate pyrophosphatase (191 aa).

Residue 12-17 (TGNKNK) participates in ITP binding. Residue Glu40 coordinates Mg(2+). ITP is bound by residues Lys52, 68-69 (DS), Lys85, 144-147 (FGWE), Lys167, and 172-173 (HR).

Belongs to the HAM1 NTPase family. In terms of assembly, homodimer. The cofactor is Mg(2+). Mn(2+) serves as cofactor.

It is found in the cytoplasm. The protein localises to the nucleus. It carries out the reaction ITP + H2O = IMP + diphosphate + H(+). It catalyses the reaction dITP + H2O = dIMP + diphosphate + H(+). The enzyme catalyses XTP + H2O = XMP + diphosphate + H(+). In terms of biological role, pyrophosphatase that hydrolyzes non-canonical purine nucleotides such as inosine triphosphate (ITP), deoxyinosine triphosphate (dITP) or xanthosine 5'-triphosphate (XTP) to their respective monophosphate derivatives. The enzyme does not distinguish between the deoxy- and ribose forms. Probably excludes non-canonical purines from RNA and DNA precursor pools, thus preventing their incorporation into RNA and DNA and avoiding chromosomal lesions. This is Inosine triphosphate pyrophosphatase from Aspergillus oryzae (strain ATCC 42149 / RIB 40) (Yellow koji mold).